A 333-amino-acid chain; its full sequence is DNA-directed RNA polymerase subunit alpha (333 aa).

The alpha N-terminal domain (alpha-NTD) stretch occupies residues 1-234; sequence MQISVNEFLT…QQLAAFVDLK (234 aa). The tract at residues 248–333 is alpha C-terminal domain (alpha-CTD); the sequence is IDPILLRPVD…SLKKDDKATA (86 aa).

The protein belongs to the RNA polymerase alpha chain family. As to quaternary structure, homodimer. The RNAP catalytic core consists of 2 alpha, 1 beta, 1 beta' and 1 omega subunit. When a sigma factor is associated with the core the holoenzyme is formed, which can initiate transcription.

It catalyses the reaction RNA(n) + a ribonucleoside 5'-triphosphate = RNA(n+1) + diphosphate. Its function is as follows. DNA-dependent RNA polymerase catalyzes the transcription of DNA into RNA using the four ribonucleoside triphosphates as substrates. This chain is DNA-directed RNA polymerase subunit alpha, found in Pseudomonas entomophila (strain L48).